Reading from the N-terminus, the 535-residue chain is Dipeptide-binding protein (535 aa).

Positions Met1–Ala28 are cleaved as a signal peptide. Cysteines 34 and 262 form a disulfide. Residues Thr48 to Gly50, Arg383 to Tyr385, and Trp433 to Asp436 contribute to the glycyl-L-leucine site. The cysteines at positions 450 and 463 are disulfide-linked.

The protein belongs to the bacterial solute-binding protein 5 family. In terms of assembly, the complex is composed of two ATP-binding proteins (DppD and DppF), two transmembrane proteins (DppB and DppC) and a solute-binding protein (DppA).

The protein resides in the periplasm. Heme binding is inhibited by dipeptide. Its function is as follows. Part of the ABC transporter DppABCDF involved in dipeptide transport. Binds dipeptides and accepts a wide range of side chains, including small neutral, bulky hydrophobic, and positively and negatively charged groups. Tripeptides are poor substrates. DppA alone controls the specificity of the Dpp transporter. In addition, plays a role in chemotaxis toward peptides via interaction with the chemotaxis protein Tap. In terms of biological role, binds heme. When a foreign outer membrane heme receptor is expressed in E.coli, DppABCDF can also transport heme and its precursor, 5-aminolevulinic acid (ALA), from the periplasm into the cytoplasm. The chain is Dipeptide-binding protein from Escherichia coli (strain K12).